The following is a 382-amino-acid chain: Porin-like protein BU359 (382 aa).

The N-terminal stretch at 1-23 (MTNRKSLAMVIPMLLAASNGVNA) is a signal peptide.

It belongs to the Gram-negative porin family. As to quaternary structure, homotrimer.

Its subcellular location is the cell outer membrane. Forms pores that allow passive diffusion of small molecules across the membrane. This chain is Porin-like protein BU359, found in Buchnera aphidicola subsp. Acyrthosiphon pisum (strain APS) (Acyrthosiphon pisum symbiotic bacterium).